Reading from the N-terminus, the 405-residue chain is L-carnitine CoA-transferase (405 aa).

Positions 97 and 104 each coordinate CoA. Aspartate 169 serves as the catalytic Nucleophile.

This sequence belongs to the CoA-transferase III family. CaiB subfamily. Homodimer.

It localises to the cytoplasm. The catalysed reaction is crotonobetainyl-CoA + (R)-carnitine = crotonobetaine + (R)-carnitinyl-CoA. It catalyses the reaction 4-(trimethylamino)butanoyl-CoA + (R)-carnitine = (R)-carnitinyl-CoA + 4-(trimethylamino)butanoate. It participates in amine and polyamine metabolism; carnitine metabolism. Functionally, catalyzes the reversible transfer of the CoA moiety from gamma-butyrobetainyl-CoA to L-carnitine to generate L-carnitinyl-CoA and gamma-butyrobetaine. Is also able to catalyze the reversible transfer of the CoA moiety from gamma-butyrobetainyl-CoA or L-carnitinyl-CoA to crotonobetaine to generate crotonobetainyl-CoA. In Shigella flexneri serotype 5b (strain 8401), this protein is L-carnitine CoA-transferase.